We begin with the raw amino-acid sequence, 65 residues long: Temporin-LK1 (65 aa).

An N-terminal signal peptide occupies residues 1-22 (MFTMKKSLLLLFFLGAINLPLC). Residues 23 to 44 (QEERNAEEERRDGDDEGSVEVQ) constitute a propeptide that is removed on maturation. Phe-63 carries the post-translational modification Phenylalanine amide.

Expressed by the skin glands.

The protein localises to the secreted. In terms of biological role, has antimicrobial activity against Gram-positive bacteria S.aureus ATCC 2592 (MIC=2.5 uM), S.aureus ATCC 43300 (MIC=2.5 uM) and B.subtilis (MIC=15.0 uM), against Gram-negative bacteria E.coli ML-35P (MIC=30.0 uM), P.aeruginosa PA01 (MIC=2.5 uM) and P.aeruginosa ATCC 27853 (MIC=2.5 uM) and against fungus C.albicans ATCC 2002 (MIC=5.0 uM). In Limnonectes kuhlii (Kuhl's Creek frog), this protein is Temporin-LK1.